Consider the following 352-residue polypeptide: tRNA pseudouridine synthase D (352 aa).

Catalysis depends on aspartate 81, which acts as the Nucleophile. Residues 157–303 (GVPNYFGLQR…MAHERRILRL (147 aa)) enclose the TRUD domain.

This sequence belongs to the pseudouridine synthase TruD family.

It catalyses the reaction uridine(13) in tRNA = pseudouridine(13) in tRNA. Its function is as follows. Responsible for synthesis of pseudouridine from uracil-13 in transfer RNAs. This Ectopseudomonas mendocina (strain ymp) (Pseudomonas mendocina) protein is tRNA pseudouridine synthase D.